Consider the following 75-residue polypeptide: Tautomerase PptA (75 aa).

Catalysis depends on proline 2, which acts as the Proton acceptor; via imino nitrogen.

It belongs to the 4-oxalocrotonate tautomerase family. PptA subfamily. Homodimer.

It localises to the cytoplasm. This chain is Tautomerase PptA, found in Klebsiella pneumoniae subsp. pneumoniae (strain ATCC 700721 / MGH 78578).